A 618-amino-acid chain; its full sequence is Protein polyglycylase TTLL10 (618 aa).

The tract at residues 1-76 (MGSSQEEGLP…GLLLGDGKPS (76 aa)) is disordered. Residues 57–74 (ATGPPAALLEGLLLGDGK) show a composition bias toward low complexity. Positions 82-479 (PGPFFYIGGN…TFQKSLRGQK (398 aa)) constitute a TTL domain. Residues lysine 240, 246 to 247 (QG), 289 to 292 (QRYI), 302 to 304 (KFD), and 345 to 346 (TN) contribute to the ATP site. Residue glutamine 246 participates in a protein binding. Aspartate 425, glutamate 438, and asparagine 440 together coordinate Mg(2+). Residues 503-618 (LGGSCSLRRR…PATLPAFRDL (116 aa)) form a disordered region. The segment covering 539–557 (PVPPPLAPQRPQLPGPSPD) has biased composition (pro residues). Basic and acidic residues predominate over residues 585-594 (AKEEREEPEN).

Mg(2+) is required as a cofactor.

It is found in the cytoplasm. The protein resides in the cytoskeleton. Its subcellular location is the cell projection. The protein localises to the cilium. It localises to the cilium axoneme. The catalysed reaction is (glycyl)(n)-glycyl-L-glutamyl-[protein] + glycine + ATP = (glycyl)(n+1)-glycyl-L-glutamyl-[protein] + ADP + phosphate + H(+). Its function is as follows. Polyglycylase which modifies both tubulin and non-tubulin proteins, generating polyglycine side chains of variable lengths on the gamma-carboxyl groups of specific glutamate residues of target proteins. Involved in the elongation step rather than the initiation step of the polyglycylation reaction. Polyglycylates alpha-tubulin and beta-tubulin. Polyglycylates non-tubulin proteins such as nucleosome assembly protein NAP1. The protein is Protein polyglycylase TTLL10 (TTLL10) of Macaca fascicularis (Crab-eating macaque).